A 592-amino-acid chain; its full sequence is RNA-binding protein 47 (592 aa).

Low complexity predominate over residues 1–24; the sequence is MTAEDAAAAMSSDSAAGGAASAKA. The tract at residues 1–26 is disordered; the sequence is MTAEDAAAAMSSDSAAGGAASAKAPE. 3 consecutive RRM domains span residues 73–151, 153–235, and 248–320; these read CEVF…CSVD, CRLF…WAEP, and KILY…LAKP. An asymmetric dimethylarginine; alternate mark is found at arginine 397 and arginine 408. Omega-N-methylarginine; alternate occurs at positions 397 and 408.

This sequence belongs to the RRM RBM47 family. Homodimer. Interacts with A1CF. Interacts with APOBEC1; form an mRNA editing complex. Interacts with RBPMS.

The protein resides in the nucleus. The protein localises to the cytoplasm. Functionally, single-stranded RNA-binding protein that functions in a variety of RNA processes, including alternative splicing, RNA stabilization, and RNA editing. Functions as an enzyme-substrate adapter for the cytidine deaminase APOBEC1. With APOBEC1 forms an mRNA editing complex involved into cytidine to uridine editing of a variety of mRNA molecules. Through the binding of their 3'UTR, also stabilizes a variety of mRNAs and regulates the expression of genes such as the interferon alpha/beta receptor and interleukin-10. Also involved in the alternative splicing of several genes including TJP1. Binds the pre-mRNA (U)GCAUG consensus sequences in downstream intronic regions of alternative exons, regulating their exclusion and inclusion into mRNAs. Independently of its RNA-binding activity, could negatively regulate MAVS by promoting its lysosomal degradation. The sequence is that of RNA-binding protein 47 from Canis lupus familiaris (Dog).